We begin with the raw amino-acid sequence, 421 residues long: MSNYTKPRGTVDLYNEAMNEFKSLENFLLTTTKKYGFQQIKTPIFEFAELFMKSAGESSDLVSKEMYLFKDKSDRWLALRPEGTAGVIRAVVENKLLLNNPLPLKLMYFEPCFRYERPQAGRQRQFHQFGVEVLGTKNIYYDFELIALANNILKKLAISDYVLEINYISTAHNRSLWVKSLQEYFNLYRDELTPLSQERITTNPLRILDDKLESQKLVVQQAPKITNFLSNEEKEEFALIKKMLDEHDIKYRVNEGLVRGLDYYSGLVFEFISTSPRLLGQSTIIGGGRYGQLIKQTGGPDYEGIGFGIGIERLLIALLDSNKQILNNFEDKYLIAYFDKELENEAIKLTQSLRINNQLNVDIILDTIKADKIFRLAQRLNAKKLIILAKKEWLNKQVILKDLLSFEQKTLNLDEIKKIKE.

Belongs to the class-II aminoacyl-tRNA synthetase family. Homodimer.

The protein localises to the cytoplasm. The catalysed reaction is tRNA(His) + L-histidine + ATP = L-histidyl-tRNA(His) + AMP + diphosphate + H(+). This chain is Histidine--tRNA ligase, found in Ureaplasma urealyticum serovar 10 (strain ATCC 33699 / Western).